A 204-amino-acid polypeptide reads, in one-letter code: IMPACT family member YigZ (204 aa).

Belongs to the IMPACT family. As to quaternary structure, monomer.

In Escherichia coli (strain K12), this protein is IMPACT family member YigZ (yigZ).